The chain runs to 527 residues: Protein Lilipod (527 aa).

The Extracellular portion of the chain corresponds to 1–22; the sequence is MDEEEEEEVTDLKLQLFHNTVR. The chain crosses the membrane as a helical span at residues 23–43; that stretch reads EHIIFLLLIILLYSSSYVVVS. The Cytoplasmic portion of the chain corresponds to 44–65; sequence RFRRRDRDDLYSNDEDEVLVYR. Residues 66–86 traverse the membrane as a helical segment; that stretch reads ISFWLCTFTLAVAEGAAMLLP. The Extracellular segment spans residues 87 to 117; that stretch reads VSIASNEVLLLYPNSYYVKWLNSSLIQGLWN. The chain crosses the membrane as a helical span at residues 118–138; it reads HVFLFSNLSLFIFLPFVYLFS. At 139–160 the chain is on the cytoplasmic side; sequence ESTGFVGNKKGILPRVYETFTV. A helical transmembrane segment spans residues 161 to 181; sequence FMLMAIIVLVLTAVLSAVFGI. At 182-194 the chain is on the extracellular side; that stretch reads EKLQFFWFLNLGS. The helical transmembrane segment at 195–215 threads the bilayer; that stretch reads VHLPFLYSCVSFLGVMLMLIC. Topologically, residues 216-341 are cytoplasmic; it reads TPYGFVRLFG…LRTSSTFQRT (126 aa). Residues 342–362 form a helical membrane-spanning segment; it reads FVYPLAMLLLLFCTAVTILLV. Residues 363-395 are Extracellular-facing; it reads VQNTLELLIGIKALPLSTRQFALGISSLSKLGP. A helical membrane pass occupies residues 396-416; that stretch reads FGAGLEVCLIFYLGATSVVGF. The Cytoplasmic portion of the chain corresponds to 417–433; the sequence is YSMPFMRKVCPKRRQTS. Residues 434-454 traverse the membrane as a helical segment; that stretch reads LPQLMLNCGFMLVLSSALPLL. At 455 to 468 the chain is on the extracellular side; it reads SRIIGITNFDLLGD. Residues 469–489 traverse the membrane as a helical segment; sequence FGAIEWLGNFQIVLLYNLVFG. The Cytoplasmic segment spans residues 490–527; sequence TTTALCLANKFTATVRRELRARLVENYVLFTNYISFIN.

It belongs to the LIMR family. In the ovary, detected in germline stem cells and their progeny. Also detected in the somatic follicular epithelium.

The protein localises to the cell membrane. Functionally, required during oogenesis to promote self-renewal of germline stem cells, probably by enhancing BMP signaling activity. This Drosophila melanogaster (Fruit fly) protein is Protein Lilipod.